The chain runs to 263 residues: Small ribosomal subunit protein uS2 (263 aa).

The segment at 223–246 is disordered; sequence KSLLEQDSDANADEAEVSQEEKDA. A compositionally biased stretch (acidic residues) spans 228–240; that stretch reads QDSDANADEAEVS.

The protein belongs to the universal ribosomal protein uS2 family.

The protein is Small ribosomal subunit protein uS2 of Campylobacter curvus (strain 525.92).